The primary structure comprises 159 residues: Large ribosomal subunit protein uL11 (159 aa).

Belongs to the universal ribosomal protein uL11 family. Part of the ribosomal stalk of the 50S ribosomal subunit. Interacts with L10 and the large rRNA to form the base of the stalk. L10 forms an elongated spine to which L12 dimers bind in a sequential fashion forming a multimeric L10(L12)X complex.

Functionally, forms part of the ribosomal stalk which helps the ribosome interact with GTP-bound translation factors. This chain is Large ribosomal subunit protein uL11, found in Methanococcus maripaludis (strain C5 / ATCC BAA-1333).